We begin with the raw amino-acid sequence, 92 residues long: UPF0250 protein Rmag_0541 (92 aa).

Belongs to the UPF0250 family.

The polypeptide is UPF0250 protein Rmag_0541 (Ruthia magnifica subsp. Calyptogena magnifica).